Here is a 243-residue protein sequence, read N- to C-terminus: Pyridoxine 5'-phosphate synthase (243 aa).

Residue Asn6 coordinates 3-amino-2-oxopropyl phosphate. Residue 8–9 participates in 1-deoxy-D-xylulose 5-phosphate binding; that stretch reads DH. Arg17 contributes to the 3-amino-2-oxopropyl phosphate binding site. The active-site Proton acceptor is His42. Arg44 and His49 together coordinate 1-deoxy-D-xylulose 5-phosphate. The Proton acceptor role is filled by Glu72. Residue Thr102 coordinates 1-deoxy-D-xylulose 5-phosphate. His192 acts as the Proton donor in catalysis. Residues Gly193 and 214 to 215 each bind 3-amino-2-oxopropyl phosphate; that span reads GH.

It belongs to the PNP synthase family. In terms of assembly, homooctamer; tetramer of dimers.

Its subcellular location is the cytoplasm. The enzyme catalyses 3-amino-2-oxopropyl phosphate + 1-deoxy-D-xylulose 5-phosphate = pyridoxine 5'-phosphate + phosphate + 2 H2O + H(+). Its pathway is cofactor biosynthesis; pyridoxine 5'-phosphate biosynthesis; pyridoxine 5'-phosphate from D-erythrose 4-phosphate: step 5/5. Functionally, catalyzes the complicated ring closure reaction between the two acyclic compounds 1-deoxy-D-xylulose-5-phosphate (DXP) and 3-amino-2-oxopropyl phosphate (1-amino-acetone-3-phosphate or AAP) to form pyridoxine 5'-phosphate (PNP) and inorganic phosphate. This is Pyridoxine 5'-phosphate synthase from Sulfurihydrogenibium sp. (strain YO3AOP1).